Here is a 108-residue protein sequence, read N- to C-terminus: Ribonuclease P protein component 4 (108 aa).

Zn(2+) contacts are provided by Cys-67, Cys-70, Cys-93, and Cys-96.

The protein belongs to the eukaryotic/archaeal RNase P protein component 4 family. Consists of a catalytic RNA component and at least 4-5 protein subunits. Zn(2+) is required as a cofactor.

It is found in the cytoplasm. It carries out the reaction Endonucleolytic cleavage of RNA, removing 5'-extranucleotides from tRNA precursor.. Functionally, part of ribonuclease P, a protein complex that generates mature tRNA molecules by cleaving their 5'-ends. This chain is Ribonuclease P protein component 4, found in Methanococcoides burtonii (strain DSM 6242 / NBRC 107633 / OCM 468 / ACE-M).